Here is a 282-residue protein sequence, read N- to C-terminus: 3-oxoadipate CoA-transferase subunit A (282 aa).

The protein belongs to the 3-oxoacid CoA-transferase subunit A family. Heterotetramer composed of 2 A and 2 B subunits.

The enzyme catalyses 3-oxoadipate + succinyl-CoA = 3-oxoadipyl-CoA + succinate. It functions in the pathway aromatic compound metabolism; beta-ketoadipate pathway; acetyl-CoA and succinyl-CoA from 3-oxoadipate: step 1/2. Functionally, catalyzes the CoA transfer from succinate to 3-oxoadipate (beta-ketoadipate). This is 3-oxoadipate CoA-transferase subunit A (catI) from Pseudomonas knackmussii (strain DSM 6978 / CCUG 54928 / LMG 23759 / B13).